A 239-amino-acid polypeptide reads, in one-letter code: Non-classical arabinogalactan protein 30 (239 aa).

Positions Met1–Thr24 are cleaved as a signal peptide. Asn106 carries N-linked (GlcNAc...) asparagine glycosylation.

The protein belongs to the non-classical AGP family. In terms of tissue distribution, specifically expressed in root tips.

It is found in the secreted. The protein localises to the cell wall. Functionally, proteoglycan required for the timing of seed germination. May function in the abscisic acid (ABA) response. This Arabidopsis thaliana (Mouse-ear cress) protein is Non-classical arabinogalactan protein 30.